We begin with the raw amino-acid sequence, 307 residues long: Ornithine carbamoyltransferase (307 aa).

Carbamoyl phosphate-binding positions include 56-59 (STRT), Gln-83, Arg-107, and 134-137 (HPCQ). Residues Asn-165, Asp-223, and 227-228 (SM) contribute to the L-ornithine site. Carbamoyl phosphate is bound by residues 263-264 (CL) and Arg-291.

It belongs to the aspartate/ornithine carbamoyltransferase superfamily. OTCase family.

It localises to the cytoplasm. It carries out the reaction carbamoyl phosphate + L-ornithine = L-citrulline + phosphate + H(+). Its pathway is amino-acid biosynthesis; L-arginine biosynthesis; L-arginine from L-ornithine and carbamoyl phosphate: step 1/3. Its function is as follows. Reversibly catalyzes the transfer of the carbamoyl group from carbamoyl phosphate (CP) to the N(epsilon) atom of ornithine (ORN) to produce L-citrulline. The chain is Ornithine carbamoyltransferase from Cupriavidus pinatubonensis (strain JMP 134 / LMG 1197) (Cupriavidus necator (strain JMP 134)).